The primary structure comprises 373 residues: GTP cyclohydrolase 1 type 2 homolog (373 aa).

Positions 67, 68, 106, 333, and 336 each coordinate a divalent metal cation.

This sequence belongs to the GTP cyclohydrolase I type 2/NIF3 family. Homohexamer.

The polypeptide is GTP cyclohydrolase 1 type 2 homolog (Listeria innocua serovar 6a (strain ATCC BAA-680 / CLIP 11262)).